Reading from the N-terminus, the 125-residue chain is Small ribosomal subunit protein uS11 (125 aa).

Belongs to the universal ribosomal protein uS11 family. As to quaternary structure, part of the 30S ribosomal subunit. Interacts with proteins S7 and S18. Binds to IF-3.

In terms of biological role, located on the platform of the 30S subunit, it bridges several disparate RNA helices of the 16S rRNA. Forms part of the Shine-Dalgarno cleft in the 70S ribosome. This Coprothermobacter proteolyticus (strain ATCC 35245 / DSM 5265 / OCM 4 / BT) protein is Small ribosomal subunit protein uS11.